The sequence spans 455 residues: UDP-N-acetylmuramate--L-alanine ligase (455 aa).

An ATP-binding site is contributed by 109–115 (GTHGKTT).

Belongs to the MurCDEF family.

The protein resides in the cytoplasm. The catalysed reaction is UDP-N-acetyl-alpha-D-muramate + L-alanine + ATP = UDP-N-acetyl-alpha-D-muramoyl-L-alanine + ADP + phosphate + H(+). The protein operates within cell wall biogenesis; peptidoglycan biosynthesis. Functionally, cell wall formation. This chain is UDP-N-acetylmuramate--L-alanine ligase, found in Caldicellulosiruptor bescii (strain ATCC BAA-1888 / DSM 6725 / KCTC 15123 / Z-1320) (Anaerocellum thermophilum).